A 303-amino-acid chain; its full sequence is Ornithine carbamoyltransferase (303 aa).

Carbamoyl phosphate contacts are provided by residues 52-55, glutamine 79, arginine 103, and 130-133; these read STRT and HPCQ. L-ornithine is bound by residues asparagine 161, aspartate 222, and 226–227; that span reads SM. Carbamoyl phosphate contacts are provided by residues 262-263 and arginine 290; that span reads CL.

Belongs to the aspartate/ornithine carbamoyltransferase superfamily. OTCase family.

The protein resides in the cytoplasm. It carries out the reaction carbamoyl phosphate + L-ornithine = L-citrulline + phosphate + H(+). The protein operates within amino-acid biosynthesis; L-arginine biosynthesis; L-arginine from L-ornithine and carbamoyl phosphate: step 1/3. In terms of biological role, reversibly catalyzes the transfer of the carbamoyl group from carbamoyl phosphate (CP) to the N(epsilon) atom of ornithine (ORN) to produce L-citrulline. The chain is Ornithine carbamoyltransferase from Geobacter metallireducens (strain ATCC 53774 / DSM 7210 / GS-15).